A 289-amino-acid chain; its full sequence is MRFDEAYSGKVFIMSRSNYEKSKAVIFGMPMDWTVSFRPSSRFGPNRIREASLGLEEYSPYMDKHLEEVAYFDAGDMLLPFGNPQRSLEMIESYVDKLLADQKMPIGLGGEHLVSWPIFKAMHKIYPDMAIIHIDAHADLREEYEGEPLSHSTPIRKACSLIGPENVYSFGIRSGMREEFQYAKDSGMYMAKFEVATPLKEVLPKLAGRNVYVTIDIDVLDPAFAPGTGTAEAGGISSKELLEAIVAIAHSDVNVIGADLVEVAPAYDPSEKTPIAASKFVREMLLGWV.

Residues His-112, Asp-135, His-137, Asp-139, Asp-216, and Asp-218 each contribute to the Mn(2+) site.

Belongs to the arginase family. Agmatinase subfamily. It depends on Mn(2+) as a cofactor.

It catalyses the reaction agmatine + H2O = urea + putrescine. The protein operates within amine and polyamine biosynthesis; putrescine biosynthesis via agmatine pathway; putrescine from agmatine: step 1/1. Functionally, catalyzes the formation of putrescine from agmatine. This Halalkalibacterium halodurans (strain ATCC BAA-125 / DSM 18197 / FERM 7344 / JCM 9153 / C-125) (Bacillus halodurans) protein is Agmatinase (speB).